Here is a 356-residue protein sequence, read N- to C-terminus: Holliday junction branch migration complex subunit RuvB (356 aa).

The tract at residues 4–191 (TDKLATEQRI…FGIVARLEFY (188 aa)) is large ATPase domain (RuvB-L). Residues L30, R31, G72, K75, T76, T77, 138-140 (EDY), R181, Y191, and R228 contribute to the ATP site. Residue T76 participates in Mg(2+) binding. A small ATPAse domain (RuvB-S) region spans residues 192-262 (DAEQLSRIVR…VADAALAMLD (71 aa)). Residues 265–356 (PVGFDLMDRK…RGEWDTPDGK (92 aa)) form a head domain (RuvB-H) region. DNA is bound by residues R301, R320, and R325.

Belongs to the RuvB family. Homohexamer. Forms an RuvA(8)-RuvB(12)-Holliday junction (HJ) complex. HJ DNA is sandwiched between 2 RuvA tetramers; dsDNA enters through RuvA and exits via RuvB. An RuvB hexamer assembles on each DNA strand where it exits the tetramer. Each RuvB hexamer is contacted by two RuvA subunits (via domain III) on 2 adjacent RuvB subunits; this complex drives branch migration. In the full resolvosome a probable DNA-RuvA(4)-RuvB(12)-RuvC(2) complex forms which resolves the HJ.

It localises to the cytoplasm. The catalysed reaction is ATP + H2O = ADP + phosphate + H(+). In terms of biological role, the RuvA-RuvB-RuvC complex processes Holliday junction (HJ) DNA during genetic recombination and DNA repair, while the RuvA-RuvB complex plays an important role in the rescue of blocked DNA replication forks via replication fork reversal (RFR). RuvA specifically binds to HJ cruciform DNA, conferring on it an open structure. The RuvB hexamer acts as an ATP-dependent pump, pulling dsDNA into and through the RuvAB complex. RuvB forms 2 homohexamers on either side of HJ DNA bound by 1 or 2 RuvA tetramers; 4 subunits per hexamer contact DNA at a time. Coordinated motions by a converter formed by DNA-disengaged RuvB subunits stimulates ATP hydrolysis and nucleotide exchange. Immobilization of the converter enables RuvB to convert the ATP-contained energy into a lever motion, pulling 2 nucleotides of DNA out of the RuvA tetramer per ATP hydrolyzed, thus driving DNA branch migration. The RuvB motors rotate together with the DNA substrate, which together with the progressing nucleotide cycle form the mechanistic basis for DNA recombination by continuous HJ branch migration. Branch migration allows RuvC to scan DNA until it finds its consensus sequence, where it cleaves and resolves cruciform DNA. The chain is Holliday junction branch migration complex subunit RuvB from Burkholderia lata (strain ATCC 17760 / DSM 23089 / LMG 22485 / NCIMB 9086 / R18194 / 383).